A 539-amino-acid polypeptide reads, in one-letter code: Inosine-5'-monophosphate dehydrogenase (539 aa).

2 consecutive CBS domains span residues 140–196 and 200–257; these read IIVN…DMPI and MTRE…PRAC. NAD(+) is bound by residues Asp-292 and 343–345; that span reads GIG. Positions 345 and 347 each coordinate K(+). Ser-348 contributes to the IMP binding site. Residue Cys-350 participates in K(+) binding. The active-site Thioimidate intermediate is the Cys-350. Residues 383 to 385, 406 to 407, and 430 to 434 each bind IMP; these read DGG, GS, and YRGMG. Arg-446 functions as the Proton acceptor in the catalytic mechanism. Position 460 (Glu-460) interacts with IMP. Residues Glu-514 and His-516 each contribute to the K(+) site. The segment at 517-539 is disordered; the sequence is PHDIAITQEAPNYSPDVHSGDAG.

Belongs to the IMPDH/GMPR family. As to quaternary structure, homotetramer. It depends on K(+) as a cofactor.

The catalysed reaction is IMP + NAD(+) + H2O = XMP + NADH + H(+). Its pathway is purine metabolism; XMP biosynthesis via de novo pathway; XMP from IMP: step 1/1. With respect to regulation, mycophenolic acid (MPA) is a non-competitive inhibitor that prevents formation of the closed enzyme conformation by binding to the same site as the amobile flap. In contrast, mizoribine monophosphate (MZP) is a competitive inhibitor that induces the closed conformation. MPA is a potent inhibitor of mammalian IMPDHs but a poor inhibitor of the bacterial enzymes. MZP is a more potent inhibitor of bacterial IMPDH. Its function is as follows. Catalyzes the conversion of inosine 5'-phosphate (IMP) to xanthosine 5'-phosphate (XMP), the first committed and rate-limiting step in the de novo synthesis of guanine nucleotides, and therefore plays an important role in the regulation of cell growth. The protein is Inosine-5'-monophosphate dehydrogenase of Rhodopirellula baltica (strain DSM 10527 / NCIMB 13988 / SH1).